Reading from the N-terminus, the 898-residue chain is Neutral alpha-glucosidase C (898 aa).

Residues 154 to 173 (QRATKGNGQNTPAATSQENQ) are disordered. The segment covering 157 to 171 (TKGNGQNTPAATSQE) has biased composition (polar residues). Catalysis depends on Asp-495, which acts as the Nucleophile. Residue Glu-498 is part of the active site. Asp-571 functions as the Proton donor in the catalytic mechanism.

It belongs to the glycosyl hydrolase 31 family.

The catalysed reaction is Hydrolysis of terminal, non-reducing (1-&gt;4)-linked alpha-D-glucose residues with release of alpha-D-glucose.. Its function is as follows. Has alpha-glucosidase activity. The polypeptide is Neutral alpha-glucosidase C (Ganc) (Mus musculus (Mouse)).